The chain runs to 535 residues: Light-independent protochlorophyllide reductase subunit B (535 aa).

Residue Asp36 coordinates [4Fe-4S] cluster. Asp292 functions as the Proton donor in the catalytic mechanism. 428–429 is a binding site for substrate; it reads GL.

Belongs to the ChlB/BchB/BchZ family. In terms of assembly, protochlorophyllide reductase is composed of three subunits; BchL, BchN and BchB. Forms a heterotetramer of two BchB and two BchN subunits. [4Fe-4S] cluster is required as a cofactor.

It carries out the reaction chlorophyllide a + oxidized 2[4Fe-4S]-[ferredoxin] + 2 ADP + 2 phosphate = protochlorophyllide a + reduced 2[4Fe-4S]-[ferredoxin] + 2 ATP + 2 H2O. The protein operates within porphyrin-containing compound metabolism; bacteriochlorophyll biosynthesis (light-independent). Its function is as follows. Component of the dark-operative protochlorophyllide reductase (DPOR) that uses Mg-ATP and reduced ferredoxin to reduce ring D of protochlorophyllide (Pchlide) to form chlorophyllide a (Chlide). This reaction is light-independent. The NB-protein (BchN-BchB) is the catalytic component of the complex. This chain is Light-independent protochlorophyllide reductase subunit B, found in Chlorobaculum parvum (strain DSM 263 / NCIMB 8327) (Chlorobium vibrioforme subsp. thiosulfatophilum).